Here is a 946-residue protein sequence, read N- to C-terminus: Inter-alpha-trypsin inhibitor heavy chain H2 (946 aa).

A signal peptide spans 1–18; it reads MQRPVCLLIWLFLLEAQA. Residues 19-54 constitute a propeptide that is removed on maturation; the sequence is FEIPINGNSEFAEYSDLVELAPDKLPFVQENGRHQR. Residues 56–185 enclose the VIT domain; sequence LPEESGEETD…KVQFELHYQE (130 aa). At Ser-60 the chain carries Phosphoserine. 2 N-linked (GlcNAc...) asparagine glycosylation sites follow: Asn-118 and Asn-263. A 4-carboxyglutamate mark is found at Glu-282 and Glu-283. The VWFA domain maps to 308–468; sequence PKNILFVIDV…YDFLKRLSNE (161 aa). Asn-445 is a glycosylation site (N-linked (GlcNAc...) asparagine). The residue at position 466 (Ser-466) is a Phosphoserine. Asp-702 is modified (aspartate 1-(chondroitin 4-sulfate)-ester). The propeptide occupies 703 to 946; sequence PHFIIYLPKS…PQLYSFLKRP (244 aa). Ser-886 is subject to Phosphoserine.

This sequence belongs to the ITIH family. In terms of assembly, I-alpha-I plasma protease inhibitors are assembled from one or two heavy chains (HC) and one light chain, bikunin. Inter-alpha-inhibitor (I-alpha-I) is composed of ITIH1/HC1, ITIH2/HC2 and bikunin. Post-translationally, heavy chains are linked to bikunin via chondroitin 4-sulfate esterified to the alpha-carboxyl of the C-terminal aspartate after propeptide cleavage. Phosphorylated by FAM20C in the extracellular medium. Expressed in both liver and brain.

It localises to the secreted. May act as a carrier of hyaluronan in serum or as a binding protein between hyaluronan and other matrix protein, including those on cell surfaces in tissues to regulate the localization, synthesis and degradation of hyaluronan which are essential to cells undergoing biological processes. This chain is Inter-alpha-trypsin inhibitor heavy chain H2 (Itih2), found in Mus musculus (Mouse).